The chain runs to 459 residues: Cysteine--tRNA ligase (459 aa).

Cys28 is a binding site for Zn(2+). The 'HIGH' region signature appears at 30–40 (VTVYDLCHIGH). Residues Cys209, His234, and Glu238 each coordinate Zn(2+). A 'KMSKS' region motif is present at residues 266–270 (KMSKS). ATP is bound at residue Lys269.

This sequence belongs to the class-I aminoacyl-tRNA synthetase family. Monomer. Requires Zn(2+) as cofactor.

It is found in the cytoplasm. It catalyses the reaction tRNA(Cys) + L-cysteine + ATP = L-cysteinyl-tRNA(Cys) + AMP + diphosphate. The chain is Cysteine--tRNA ligase from Haemophilus influenzae (strain 86-028NP).